The chain runs to 200 residues: Holliday junction branch migration complex subunit RuvA (200 aa).

Residues 1-64 (MIGHLRGIIV…EDAHTLYGFH (64 aa)) form a domain I region. Residues 65–143 (NDHERRLFRA…RWHTNDTPSP (79 aa)) are domain II. Residues 133 to 152 (SRWHTNDTPSPEGLRSSNTQ) are disordered. A flexible linker region spans residues 144-148 (EGLRS). The domain III stretch occupies residues 149-200 (SNTQPTQDAISALMALGYKPQEAKRAIDAIQKPDLSAETLIRLALKQMVLGT).

This sequence belongs to the RuvA family. Homotetramer. Forms an RuvA(8)-RuvB(12)-Holliday junction (HJ) complex. HJ DNA is sandwiched between 2 RuvA tetramers; dsDNA enters through RuvA and exits via RuvB. An RuvB hexamer assembles on each DNA strand where it exits the tetramer. Each RuvB hexamer is contacted by two RuvA subunits (via domain III) on 2 adjacent RuvB subunits; this complex drives branch migration. In the full resolvosome a probable DNA-RuvA(4)-RuvB(12)-RuvC(2) complex forms which resolves the HJ.

It localises to the cytoplasm. In terms of biological role, the RuvA-RuvB-RuvC complex processes Holliday junction (HJ) DNA during genetic recombination and DNA repair, while the RuvA-RuvB complex plays an important role in the rescue of blocked DNA replication forks via replication fork reversal (RFR). RuvA specifically binds to HJ cruciform DNA, conferring on it an open structure. The RuvB hexamer acts as an ATP-dependent pump, pulling dsDNA into and through the RuvAB complex. HJ branch migration allows RuvC to scan DNA until it finds its consensus sequence, where it cleaves and resolves the cruciform DNA. The sequence is that of Holliday junction branch migration complex subunit RuvA from Coxiella burnetii (strain CbuK_Q154) (Coxiella burnetii (strain Q154)).